Here is a 508-residue protein sequence, read N- to C-terminus: MQLTLWTYEGPPHVGAMRVAAAMKDVHYVLHAPQGDTYADLLFTMIERRESRPPVTYTTFEARDLGGDTAALFQRTAQEAYERFKPKALLVGSSCTAELIQDDPGGLARGLGLPVPVIPLEFSAYQRKENFGASLTFYNLVRAFAKALATPRATRSAARPSCNLLGATALGFRHRDDIREVTLLLDRLGVGVNICAPLGASPDDLARLPEADFNIVLYPEVALEAAEWLKRTHRQPLVKTQPIGVGATHAFIEEVARLAGLDPRPLLGPAESRLEWYSRSVDSTYLTGKRVFIFGDATHAIAAARVASRELGFTVAGLGSYSREFAREMRAAAALYSLNALITDDYLEVEAEIERLQPELVLGTQMERHIAKRLGIPCAVISAPVHVQDFPARHSPQMVFEGANVIFDSWVHPLMMGLEEHLLTMFRGDEEFHDEAAPSHLGVAVATAQATHTPAILAWDAGAERELKSIPFFVRGKARRNTERYAQERGLPLITIETLYDAKAHYSR.

Asp36 contributes to the [4Fe-4S] cluster binding site. Asp282 functions as the Proton donor in the catalytic mechanism. 417-418 contributes to the substrate binding site; it reads GL.

The protein belongs to the ChlB/BchB/BchZ family. Protochlorophyllide reductase is composed of three subunits; BchL, BchN and BchB. Forms a heterotetramer of two BchB and two BchN subunits. It depends on [4Fe-4S] cluster as a cofactor.

The enzyme catalyses chlorophyllide a + oxidized 2[4Fe-4S]-[ferredoxin] + 2 ADP + 2 phosphate = protochlorophyllide a + reduced 2[4Fe-4S]-[ferredoxin] + 2 ATP + 2 H2O. Its pathway is porphyrin-containing compound metabolism; bacteriochlorophyll biosynthesis (light-independent). Its function is as follows. Component of the dark-operative protochlorophyllide reductase (DPOR) that uses Mg-ATP and reduced ferredoxin to reduce ring D of protochlorophyllide (Pchlide) to form chlorophyllide a (Chlide). This reaction is light-independent. The NB-protein (BchN-BchB) is the catalytic component of the complex. The chain is Light-independent protochlorophyllide reductase subunit B from Methylocella silvestris (strain DSM 15510 / CIP 108128 / LMG 27833 / NCIMB 13906 / BL2).